Here is a 474-residue protein sequence, read N- to C-terminus: Amidophosphoribosyltransferase (474 aa).

A propeptide spanning residues 1 to 10 is cleaved from the precursor; sequence MLGESEVRDK. C11 functions as the Nucleophile in the catalytic mechanism. One can recognise a Glutamine amidotransferase type-2 domain in the interval 11–234; it reads CGIVGIYSQD…PGEILHLNRG (224 aa). C250 contacts [4Fe-4S] cluster. 3 residues coordinate Mg(2+): S297, D359, and D360. Positions 396, 447, and 450 each coordinate [4Fe-4S] cluster.

The protein in the C-terminal section; belongs to the purine/pyrimidine phosphoribosyltransferase family. The cofactor is Mg(2+). [4Fe-4S] cluster serves as cofactor.

It catalyses the reaction 5-phospho-beta-D-ribosylamine + L-glutamate + diphosphate = 5-phospho-alpha-D-ribose 1-diphosphate + L-glutamine + H2O. Its pathway is purine metabolism; IMP biosynthesis via de novo pathway; N(1)-(5-phospho-D-ribosyl)glycinamide from 5-phospho-alpha-D-ribose 1-diphosphate: step 1/2. Functionally, catalyzes the formation of phosphoribosylamine from phosphoribosylpyrophosphate (PRPP) and glutamine. The chain is Amidophosphoribosyltransferase from Methanothermobacter thermautotrophicus (strain ATCC 29096 / DSM 1053 / JCM 10044 / NBRC 100330 / Delta H) (Methanobacterium thermoautotrophicum).